Here is a 751-residue protein sequence, read N- to C-terminus: Probable alpha-galactosidase C (751 aa).

An N-terminal signal peptide occupies residues 1–27; it reads MFGSPKRAALAAASLLAVFGNGPSVMA. Residues Asn49, Asn57, Asn162, Asn186, Asn194, Asn366, Asn433, Asn452, and Asn500 are each glycosylated (N-linked (GlcNAc...) asparagine). The active-site Nucleophile is Asp510. The active-site Proton donor is the Asp572. Asn720 is a glycosylation site (N-linked (GlcNAc...) asparagine).

This sequence belongs to the glycosyl hydrolase 36 family. In terms of assembly, homotetramer. It depends on Mg(2+) as a cofactor. NAD(+) serves as cofactor.

The protein localises to the secreted. The catalysed reaction is Hydrolysis of terminal, non-reducing alpha-D-galactose residues in alpha-D-galactosides, including galactose oligosaccharides, galactomannans and galactolipids.. Functionally, hydrolyzes a variety of simple alpha-D-galactoside as well as more complex molecules such as oligosaccharides and polysaccharides. In Aspergillus oryzae (strain ATCC 42149 / RIB 40) (Yellow koji mold), this protein is Probable alpha-galactosidase C (aglC).